Here is a 371-residue protein sequence, read N- to C-terminus: Archaeal glycosylation protein Q (371 aa).

Residues 19–39 are disordered; that stretch reads QRSDGSMPAGHNGPYHDPETP.

It is found in the cytoplasm. It functions in the pathway cell surface structure biogenesis; S-layer biogenesis. In terms of biological role, putative isomerase involved in the N-glycosylation pathway. Required for the appearance of the methyl ester of hexuronic acid found at position four of the pentasaccharide N-linked to the S-layer glycoprotein. Either involved in preparing the third sugar for attachment of the fourth pentasaccharide subunit or processing the fourth sugar prior to its addition to the lipid-linked trisaccharide. The protein is Archaeal glycosylation protein Q (aglQ) of Haloferax volcanii (strain ATCC 29605 / DSM 3757 / JCM 8879 / NBRC 14742 / NCIMB 2012 / VKM B-1768 / DS2) (Halobacterium volcanii).